The primary structure comprises 399 residues: S-adenosylmethionine synthase (399 aa).

ATP is bound at residue histidine 15. Aspartate 17 lines the Mg(2+) pocket. Position 43 (glutamate 43) interacts with K(+). Glutamate 56 and glutamine 99 together coordinate L-methionine. Positions 99–109 are flexible loop; that stretch reads QSPDIAGGVDH. Residues 175–177, 242–243, aspartate 251, 257–258, alanine 274, and lysine 278 each bind ATP; these read DAK, RF, and RK. An L-methionine-binding site is contributed by aspartate 251. An L-methionine-binding site is contributed by lysine 282.

This sequence belongs to the AdoMet synthase family. As to quaternary structure, homotetramer; dimer of dimers. Requires Mg(2+) as cofactor. K(+) serves as cofactor.

The protein localises to the cytoplasm. The enzyme catalyses L-methionine + ATP + H2O = S-adenosyl-L-methionine + phosphate + diphosphate. Its pathway is amino-acid biosynthesis; S-adenosyl-L-methionine biosynthesis; S-adenosyl-L-methionine from L-methionine: step 1/1. Functionally, catalyzes the formation of S-adenosylmethionine (AdoMet) from methionine and ATP. The overall synthetic reaction is composed of two sequential steps, AdoMet formation and the subsequent tripolyphosphate hydrolysis which occurs prior to release of AdoMet from the enzyme. The chain is S-adenosylmethionine synthase from Lactobacillus helveticus (strain DPC 4571).